Consider the following 98-residue polypeptide: Aspartyl/glutamyl-tRNA(Asn/Gln) amidotransferase subunit C (98 aa).

It belongs to the GatC family. Heterotrimer of A, B and C subunits.

It carries out the reaction L-glutamyl-tRNA(Gln) + L-glutamine + ATP + H2O = L-glutaminyl-tRNA(Gln) + L-glutamate + ADP + phosphate + H(+). It catalyses the reaction L-aspartyl-tRNA(Asn) + L-glutamine + ATP + H2O = L-asparaginyl-tRNA(Asn) + L-glutamate + ADP + phosphate + 2 H(+). Functionally, allows the formation of correctly charged Asn-tRNA(Asn) or Gln-tRNA(Gln) through the transamidation of misacylated Asp-tRNA(Asn) or Glu-tRNA(Gln) in organisms which lack either or both of asparaginyl-tRNA or glutaminyl-tRNA synthetases. The reaction takes place in the presence of glutamine and ATP through an activated phospho-Asp-tRNA(Asn) or phospho-Glu-tRNA(Gln). This chain is Aspartyl/glutamyl-tRNA(Asn/Gln) amidotransferase subunit C, found in Roseiflexus castenholzii (strain DSM 13941 / HLO8).